The sequence spans 233 residues: UPF0173 metal-dependent hydrolase Igni_1254 (233 aa).

Belongs to the UPF0173 family.

The sequence is that of UPF0173 metal-dependent hydrolase Igni_1254 from Ignicoccus hospitalis (strain KIN4/I / DSM 18386 / JCM 14125).